The following is a 931-amino-acid chain: Protein phosphatase 1 regulatory subunit 37 homolog (931 aa).

The segment at 20-71 is disordered; the sequence is TAASSPASPIPPTSPSMFATPPHQQSHSSATSVRKKVCQEANSSADDPDSDA. A compositionally biased stretch (polar residues) spans 41-51; sequence PHQQSHSSATS. 8 LRR repeats span residues 232 to 259, 262 to 285, 290 to 314, 323 to 346, 351 to 374, 379 to 407, 409 to 430, and 435 to 458; these read AISL…LARA, SASL…VLIC, NTGI…IYQL, LLDL…LRNR, KSAL…SLAE, NTKI…LVSN, HLHR…ILAE, and NTAL…ALHS. Residues 519 to 533 show a composition bias toward basic and acidic residues; the sequence is QDHVSEDTEKENKDA. 2 disordered regions span residues 519–602 and 780–807; these read QDHV…RHQR and PDCT…IRQR. Positions 534-547 are enriched in acidic residues; sequence DNDDKEPENEDGDT. The span at 554 to 563 shows a compositional bias: low complexity; that stretch reads SDASADQSDS. 2 stretches are compositionally biased toward basic and acidic residues: residues 564-584 and 790-807; these read PADK…EKRP and TTSR…IRQR.

Belongs to the PPP1R37 family.

The sequence is that of Protein phosphatase 1 regulatory subunit 37 homolog from Caenorhabditis briggsae.